The chain runs to 60 residues: Cytotoxin sagitoxin (60 aa).

Intrachain disulfides connect Cys-3–Cys-21, Cys-14–Cys-38, Cys-42–Cys-53, and Cys-54–Cys-59.

Belongs to the three-finger toxin family. Short-chain subfamily. Type IA cytotoxin sub-subfamily. In terms of assembly, monomer in solution; Homodimer and oligomer (homohexamer) in the presence of negatively charged lipids forming a pore with a size ranging between 20 and 30 Angstroms. As to expression, expressed by the venom gland.

The protein resides in the secreted. The protein localises to the target cell membrane. Functionally, shows cytolytic activity on many different cells by forming pore in lipid membranes. In vivo, increases heart rate or kill the animal by cardiac arrest. In addition, it binds to heparin with high affinity, interacts with Kv channel-interacting protein 1 (KCNIP1) in a calcium-independent manner, and binds to integrin alpha-V/beta-3 (ITGAV/ITGB3) with moderate affinity. The polypeptide is Cytotoxin sagitoxin (Naja sagittifera (Andaman cobra)).